A 445-amino-acid polypeptide reads, in one-letter code: Ribosomal protein uS12 methylthiotransferase RimO (445 aa).

Positions 10 to 120 (PKVGFVSLGC…VVNAVHEVVP (111 aa)) constitute an MTTase N-terminal domain. [4Fe-4S] cluster-binding residues include cysteine 19, cysteine 55, cysteine 84, cysteine 153, cysteine 157, and cysteine 160. One can recognise a Radical SAM core domain in the interval 139–378 (LTPRHYAYLK…AHQQEISSAR (240 aa)). The 66-residue stretch at 380-445 (QQRIGKEIEV…DEYDLWAETL (66 aa)) folds into the TRAM domain.

Belongs to the methylthiotransferase family. RimO subfamily. The cofactor is [4Fe-4S] cluster.

Its subcellular location is the cytoplasm. The enzyme catalyses L-aspartate(89)-[ribosomal protein uS12]-hydrogen + (sulfur carrier)-SH + AH2 + 2 S-adenosyl-L-methionine = 3-methylsulfanyl-L-aspartate(89)-[ribosomal protein uS12]-hydrogen + (sulfur carrier)-H + 5'-deoxyadenosine + L-methionine + A + S-adenosyl-L-homocysteine + 2 H(+). In terms of biological role, catalyzes the methylthiolation of an aspartic acid residue of ribosomal protein uS12. The chain is Ribosomal protein uS12 methylthiotransferase RimO from Pseudomonas fluorescens (strain ATCC BAA-477 / NRRL B-23932 / Pf-5).